We begin with the raw amino-acid sequence, 858 residues long: MAEESSMEGSEKEEIDSSGGGFGDMASMDSIESRWVIQDDDDSEIGVDDDNDGFDGTGLESDEDEIPEHRLIRTGPRVDSFDVEALEVPGAPRNDYEDLTVGRKVLLAFQTLGVVFGDVGTSPLYTFSVMFSKSPVQEKEDVIGALSLVLYTLLLVPLIKYVLVVLWANDDGEGGTFALYSLISRHAKISLIPNQLRSDTRISSFRLKVPCPELERSLKLKEKLENSLILKKILLVLVLAGTSMVIADGVVTPAMSVMSAVGGLKVGVDVVEQDQVVMISVAFLVILFSLQKYGTSKMGLVVGPALLIWFCSLAGIGIYNLIKYDSSVYRAFNPVHIYYFFKRNSINAWYALGGCILCATGSEALFADLCYFSVRSVQLTFVCLVLPCLMLGYMGQAAYLMENHADASQAFFSSVPGSAFWPVLFIANIAALIASRTMTTATFSCIKQSTALGCFPRLKIIHTSRKFMGQIYIPVLNWFLLAVCLVVVCSISSIDEIGNAYGMAELGVMMTTTILVTLIMLLIWQINIVIVIAFLVVFLGVELVFFSSVIASVGDGSWIILVFAVIMFGIMYIWNYGSKLRYETEVEQKLSMDLMRELGCNLGTIRAPGIGLLYNELVKGVPAIFGHFLTTLPAIHSMVIFVCIKYVPVPVVPQNERFLFRRVCTKSYHLFRCIARYGYKDARKETHQAFEQLLIESLEKFIRREAQERSLESDGNDDSDSEEDFPGSRVVIGPNGSMYSMGVPLLSEYRDLNKPIMEMNTSSDHTNHHPFDTSSDSSVSEAEQSLERELSFIHKAKESGVVYLLGHGDIRARKDSWFIKKLVINYFYTFLRKNCRRGIANLSVPQSHLMQVGMTYMV.

2 stretches are compositionally biased toward acidic residues: residues 1–16 (MAEE…EEID) and 38–53 (QDDD…DNDG). The segment at 1–68 (MAEESSMEGS…LESDEDEIPE (68 aa)) is disordered. At 1–104 (MAEESSMEGS…DYEDLTVGRK (104 aa)) the chain is on the cytoplasmic side. Residues 105 to 125 (VLLAFQTLGVVFGDVGTSPLY) traverse the membrane as a helical segment. Over 126 to 147 (TFSVMFSKSPVQEKEDVIGALS) the chain is Extracellular. A helical membrane pass occupies residues 148-168 (LVLYTLLLVPLIKYVLVVLWA). Over 169–232 (NDDGEGGTFA…KLENSLILKK (64 aa)) the chain is Cytoplasmic. Residues 233 to 253 (ILLVLVLAGTSMVIADGVVTP) traverse the membrane as a helical segment. Residues 254 to 269 (AMSVMSAVGGLKVGVD) are Extracellular-facing. Residues 270–290 (VVEQDQVVMISVAFLVILFSL) form a helical membrane-spanning segment. Residues 291-297 (QKYGTSK) lie on the Cytoplasmic side of the membrane. Residues 298–318 (MGLVVGPALLIWFCSLAGIGI) traverse the membrane as a helical segment. The Extracellular segment spans residues 319–345 (YNLIKYDSSVYRAFNPVHIYYFFKRNS). A helical transmembrane segment spans residues 346-366 (INAWYALGGCILCATGSEALF). Topologically, residues 367–380 (ADLCYFSVRSVQLT) are cytoplasmic. The helical transmembrane segment at 381-401 (FVCLVLPCLMLGYMGQAAYLM) threads the bilayer. At 402–413 (ENHADASQAFFS) the chain is on the extracellular side. A helical transmembrane segment spans residues 414–434 (SVPGSAFWPVLFIANIAALIA). Topologically, residues 435–470 (SRTMTTATFSCIKQSTALGCFPRLKIIHTSRKFMGQ) are cytoplasmic. A helical transmembrane segment spans residues 471–491 (IYIPVLNWFLLAVCLVVVCSI). Over 492-496 (SSIDE) the chain is Extracellular. The helical transmembrane segment at 497–517 (IGNAYGMAELGVMMTTTILVT) threads the bilayer. L518 is a topological domain (cytoplasmic). A helical membrane pass occupies residues 519 to 539 (IMLLIWQINIVIVIAFLVVFL). The Extracellular portion of the chain corresponds to 540 to 552 (GVELVFFSSVIAS). The chain crosses the membrane as a helical span at residues 553–573 (VGDGSWIILVFAVIMFGIMYI). The Cytoplasmic portion of the chain corresponds to 574–858 (WNYGSKLRYE…LMQVGMTYMV (285 aa)). The tract at residues 707-731 (QERSLESDGNDDSDSEEDFPGSRVV) is disordered. The segment covering 714–725 (DGNDDSDSEEDF) has biased composition (acidic residues). 2 positions are modified to phosphoserine: S719 and S721.

It belongs to the HAK/KUP transporter (TC 2.A.72.3) family.

The protein localises to the cell membrane. Functionally, probable potassium transporter. The protein is Potassium transporter 7 (POT7) of Arabidopsis thaliana (Mouse-ear cress).